We begin with the raw amino-acid sequence, 382 residues long: Neuropeptide Y receptor type 1 (382 aa).

Residues 1-33 (MNSTLFSKVENHSIHYNASENSPLLAFENDDCH) lie on the Extracellular side of the membrane. N-linked (GlcNAc...) asparagine glycosylation is found at asparagine 2, asparagine 11, and asparagine 17. Residues 34–54 (LPLAVIFTLALAYGAVIILGV) traverse the membrane as a helical segment. Topologically, residues 55–75 (SGNLALIIIILKQKEMRNVTN) are cytoplasmic. Residues 76-96 (ILIVNLSFSDLLVAVMCLPFT) form a helical membrane-spanning segment. Over 97-115 (FVYTLMDHWVFGETMCKLN) the chain is Extracellular. Cysteine 112 and cysteine 197 are joined by a disulfide. A helical transmembrane segment spans residues 116 to 136 (PFVQCVSITVSIFSLVLIAVE). Residues 137 to 153 (RHQLIINPRGWRPNNRH) are Cytoplasmic-facing. Residues 154 to 174 (AYIGITVIWVLAVASSLPFVI) form a helical membrane-spanning segment. The Extracellular segment spans residues 175 to 210 (YQILTDEPFQNVSLAAFKDKYVCFDKFPSDSHRLSY). Residues 211-231 (TTLLLVLQYFGPLCFIFICYF) form a helical membrane-spanning segment. At 232–259 (KIYIRLKRRNNMMDKIRDSKYRSSETKR) the chain is on the cytoplasmic side. Residues 260–280 (INIMLLSIVVAFAVCWLPLTI) form a helical membrane-spanning segment. The Extracellular portion of the chain corresponds to 281-298 (FNTVFDWNHQIIATCNHN). Residues 299–319 (LLFLLCHLTAMISTCVNPIFY) form a helical membrane-spanning segment. Topologically, residues 320 to 382 (GFLNKNFQRD…KISMNDNEKV (63 aa)) are cytoplasmic. Cysteine 337 is lipidated: S-palmitoyl cysteine. Serine 367 and serine 375 each carry phosphoserine.

Belongs to the G-protein coupled receptor 1 family. The alpha form is highly expressed in the brain, heart, kidney, spleen, skeletal muscle, and lung, whereas the beta receptor mRNA was not detected in these tissues. However, the beta form is expressed in mouse embryonic developmental stage (7 and 11 days), bone marrow cells and several hematopoietic cell lines.

The protein resides in the cell membrane. Functionally, receptor for neuropeptide Y and peptide YY. This chain is Neuropeptide Y receptor type 1 (Npy1r), found in Mus musculus (Mouse).